Consider the following 114-residue polypeptide: Iron-sulfur cluster insertion protein ErpA (114 aa).

Residues Cys42, Cys106, and Cys108 each coordinate iron-sulfur cluster.

The protein belongs to the HesB/IscA family. In terms of assembly, homodimer. Iron-sulfur cluster is required as a cofactor.

Functionally, required for insertion of 4Fe-4S clusters for at least IspG. This chain is Iron-sulfur cluster insertion protein ErpA, found in Citrobacter koseri (strain ATCC BAA-895 / CDC 4225-83 / SGSC4696).